The sequence spans 473 residues: Argininosuccinate lyase (473 aa).

The protein belongs to the lyase 1 family. Argininosuccinate lyase subfamily.

The protein resides in the cytoplasm. It catalyses the reaction 2-(N(omega)-L-arginino)succinate = fumarate + L-arginine. It functions in the pathway amino-acid biosynthesis; L-arginine biosynthesis; L-arginine from L-ornithine and carbamoyl phosphate: step 3/3. The chain is Argininosuccinate lyase from Chelativorans sp. (strain BNC1).